Here is a 107-residue protein sequence, read N- to C-terminus: Thioredoxin (107 aa).

A Thioredoxin domain is found at 2-107 (SVSQVTDASF…LESTLNKYIS (106 aa)). Active-site nucleophile residues include Cys31 and Cys34. An intrachain disulfide couples Cys31 to Cys34.

This sequence belongs to the thioredoxin family.

It localises to the plastid. The protein localises to the chloroplast. Its function is as follows. Participates in various redox reactions through the reversible oxidation of its active center dithiol to a disulfide and catalyzes dithiol-disulfide exchange reactions. The polypeptide is Thioredoxin (trxA) (Porphyra purpurea (Red seaweed)).